We begin with the raw amino-acid sequence, 331 residues long: Anthranilate phosphoribosyltransferase (331 aa).

Residues glycine 79, 82–83 (GD), serine 87, 89–92 (NIST), 107–115 (KHCNTSISS), and serine 119 contribute to the 5-phospho-alpha-D-ribose 1-diphosphate site. An anthranilate-binding site is contributed by glycine 79. Serine 91 is a binding site for Mg(2+). Asparagine 110 provides a ligand contact to anthranilate. Anthranilate is bound at residue arginine 165. Residues aspartate 223 and glutamate 224 each coordinate Mg(2+).

The protein belongs to the anthranilate phosphoribosyltransferase family. Homodimer. The cofactor is Mg(2+).

The catalysed reaction is N-(5-phospho-beta-D-ribosyl)anthranilate + diphosphate = 5-phospho-alpha-D-ribose 1-diphosphate + anthranilate. The protein operates within amino-acid biosynthesis; L-tryptophan biosynthesis; L-tryptophan from chorismate: step 2/5. Its function is as follows. Catalyzes the transfer of the phosphoribosyl group of 5-phosphorylribose-1-pyrophosphate (PRPP) to anthranilate to yield N-(5'-phosphoribosyl)-anthranilate (PRA). The polypeptide is Anthranilate phosphoribosyltransferase (Buchnera aphidicola subsp. Schlechtendalia chinensis).